The primary structure comprises 336 residues: Alpha-N-acetylgalactosaminide alpha-2,6-sialyltransferase 5 (336 aa).

Residues 1–8 are Cytoplasmic-facing; sequence MKTLMRHG. The helical; Signal-anchor for type II membrane protein transmembrane segment at 9–29 threads the bilayer; that stretch reads LAVCLALTTMCTSLLLVYSSL. Over 30–336 the chain is Lumenal; it reads GGQKERPPQQ…INHPENKPVF (307 aa). The disordered stretch occupies residues 32–81; it reads QKERPPQQQQQQQQQQQQASATGSSQPAAESSTQQRPGVPAGPRPLDGYL. Low complexity predominate over residues 38–49; sequence QQQQQQQQQQQQ. Residues 50–67 show a composition bias toward polar residues; it reads ASATGSSQPAAESSTQQR. Residues cysteine 96 and cysteine 245 are joined by a disulfide bond. Asparagine 137 and asparagine 161 each carry an N-linked (GlcNAc...) asparagine glycan.

The protein belongs to the glycosyltransferase 29 family.

Its subcellular location is the golgi apparatus membrane. The enzyme catalyses a ganglioside GM1b (d18:1(4E)) + CMP-N-acetyl-beta-neuraminate = a ganglioside GD1alpha (d18:1(4E)) + CMP + H(+). The catalysed reaction is N-acetyl-alpha-neuraminosyl-(2-&gt;3)-beta-D-galactosyl-(1-&gt;3)-N-acetyl-beta-D-glucosaminyl-(1-&gt;3)-beta-D-galactosyl-(1-&gt;4)-beta-D-glucosyl-(1&lt;-&gt;1')-N-acyl-sphing-4-enine + CMP-N-acetyl-beta-neuraminate = N-acetyl-alpha-neuraminosyl-(2-&gt;3)-beta-D-galactosyl-(1-&gt;3)-[N-acetyl-alpha-neuraminosyl-(2-&gt;6)]-N-acetyl-beta-D-glucosaminyl-(1-&gt;3)-beta-D-galactosyl-(1-&gt;4)-beta-D-glucosyl-(1&lt;-&gt;1')-N-acyl-sphing-4-enine + CMP + H(+). Its pathway is glycolipid biosynthesis. Functionally, predominantly catalyzes the biosynthesis of ganglioside GD1alpha from GM1b in the brain, by transferring the sialyl group (N-acetyl-alpha-neuraminyl or NeuAc) from CMP-NeuAc to the GalNAc residue on the NeuAc-alpha-2,3-Gal-beta-1,3-GalNAc sequence of GM1b. GD1alpha is a critical molecule in the communication and interaction between neuronal cells and their supportive cells, particularly in brain tissues, and functions as an adhesion molecule in the process of metastasis. Also shows activity towards sialyl Lc4Cer (N-acetyl-alpha-neuraminosyl-(2-&gt;3)-beta-D-galactosyl-(1-&gt;3)-N-acetyl-beta-D-glucosaminyl-(1-&gt;3)-beta-D-galactosyl-(1-&gt;4)-beta-D-glucosyl-(1&lt;-&gt;1')-N-acyl-sphing-4-enine) generating disialyl Lc4Cer, which can lead to the synthesis of disialyl Lewis a (Le(a)), suggested to be a cancer-associated antigen. In Homo sapiens (Human), this protein is Alpha-N-acetylgalactosaminide alpha-2,6-sialyltransferase 5 (ST6GALNAC5).